The following is a 559-amino-acid chain: Formate--tetrahydrofolate ligase (559 aa).

ATP is bound at residue T67–S74.

Belongs to the formate--tetrahydrofolate ligase family.

The catalysed reaction is (6S)-5,6,7,8-tetrahydrofolate + formate + ATP = (6R)-10-formyltetrahydrofolate + ADP + phosphate. It functions in the pathway one-carbon metabolism; tetrahydrofolate interconversion. This is Formate--tetrahydrofolate ligase from Lactobacillus delbrueckii subsp. bulgaricus (strain ATCC BAA-365 / Lb-18).